Consider the following 111-residue polypeptide: Small ribosomal subunit protein bS16 (111 aa).

The interval Glu92–Glu111 is disordered. Acidic residues predominate over residues Glu100–Glu111.

It belongs to the bacterial ribosomal protein bS16 family.

This Petrotoga mobilis (strain DSM 10674 / SJ95) protein is Small ribosomal subunit protein bS16.